A 321-amino-acid polypeptide reads, in one-letter code: Probable cell division protein WhiA (321 aa).

The segment at residues 276–309 (NLKELGELLEPPVGKSGVNHRLRKLEKIAEQLHQ) is a DNA-binding region (H-T-H motif).

It belongs to the WhiA family.

Functionally, involved in cell division and chromosome segregation. This chain is Probable cell division protein WhiA, found in Natranaerobius thermophilus (strain ATCC BAA-1301 / DSM 18059 / JW/NM-WN-LF).